Consider the following 542-residue polypeptide: Ribonuclease Y (542 aa).

A helical transmembrane segment spans residues 1-21 (MLIALIAVSVLAVAAIIGSLA). The segment at 52-92 (SRASQDLADSRKDVAKARAELESSRTRASDEARRADNADQA) is disordered. Residues 59 to 92 (ADSRKDVAKARAELESSRTRASDEARRADNADQA) show a composition bias toward basic and acidic residues. Residues 229 to 289 (VVSVVPLPSN…MRREVARQAL (61 aa)) form the KH domain. In terms of domain architecture, HD spans 355 to 449 (VLDHCVECAR…VKAADAISAA (95 aa)).

The protein belongs to the RNase Y family.

The protein resides in the cell membrane. In terms of biological role, endoribonuclease that initiates mRNA decay. This Cutibacterium acnes (strain DSM 16379 / KPA171202) (Propionibacterium acnes) protein is Ribonuclease Y.